The primary structure comprises 90 residues: Probable Fe(2+)-trafficking protein (90 aa).

It belongs to the Fe(2+)-trafficking protein family.

Its function is as follows. Could be a mediator in iron transactions between iron acquisition and iron-requiring processes, such as synthesis and/or repair of Fe-S clusters in biosynthetic enzymes. This Azoarcus sp. (strain BH72) protein is Probable Fe(2+)-trafficking protein.